The chain runs to 131 residues: Small ribosomal subunit protein uS11 (131 aa).

This sequence belongs to the universal ribosomal protein uS11 family. In terms of assembly, part of the 30S ribosomal subunit. Interacts with proteins S7 and S18. Binds to IF-3.

Its function is as follows. Located on the platform of the 30S subunit, it bridges several disparate RNA helices of the 16S rRNA. Forms part of the Shine-Dalgarno cleft in the 70S ribosome. The protein is Small ribosomal subunit protein uS11 of Thermotoga neapolitana (strain ATCC 49049 / DSM 4359 / NBRC 107923 / NS-E).